The primary structure comprises 281 residues: tRNA N(3)-cytidine methyltransferase METTL8, mitochondrial (281 aa).

A mitochondrion-targeting transit peptide spans 1 to 22 (MNVIWRSCICRLRQGKVPHRCQ). A Glycyl lysine isopeptide (Lys-Gly) (interchain with G-Cter in SUMO) cross-link involves residue lysine 80. Positions 89 and 93 each coordinate S-adenosyl-L-methionine. The span at 139-151 (RTQGTETHCQESF) shows a compositional bias: polar residues. Positions 139-180 (RTQGTETHCQESFVSPEPGSRGRSAPDPDLEEYSKGPGKTEP) are disordered. S-adenosyl-L-methionine is bound by residues glycine 194, aspartate 220, and aspartate 246.

It belongs to the methyltransferase superfamily. METL family. Interacts with EP300. Absent in embryonic lung but is induced in a fibroblast cell line by stretch. In terms of tissue distribution, expressed in undifferentiated progenitor cells, while its expression is inhibited by stretch. As to expression, absent in undifferentiated embryonic lung mesenchymal cells, but expression is induced by stretch. Expressed in mature adipose tissue.

The protein localises to the mitochondrion. It is found in the cytoplasm. It localises to the nucleus. It catalyses the reaction cytidine(32) in tRNA(Ser) + S-adenosyl-L-methionine = N(3)-methylcytidine(32) in tRNA(Ser) + S-adenosyl-L-homocysteine + H(+). It carries out the reaction cytidine(32) in tRNA(Thr) + S-adenosyl-L-methionine = N(3)-methylcytidine(32) in tRNA(Thr) + S-adenosyl-L-homocysteine + H(+). The catalysed reaction is a cytidine in mRNA + S-adenosyl-L-methionine = an N(3)-methylcytidine in mRNA + S-adenosyl-L-homocysteine + H(+). In terms of biological role, mitochondrial S-adenosyl-L-methionine-dependent methyltransferase that mediates N(3)-methylcytidine modification of residue 32 of the tRNA anticodon loop of mitochondrial tRNA(Ser)(UCN) and tRNA(Thr). N(3)-methylcytidine methylation modification regulates mitochondrial translation efficiency and is required for activity of the respiratory chain. N(3)-methylcytidine methylation of mitochondrial tRNA(Ser)(UCN) requires the formation of N(6)-dimethylallyladenosine(37) (i6A37) by TRIT1 as prerequisite. May also mediate N(3)-methylcytidine modification of mRNAs. The existence of N(3)-methylcytidine modification on mRNAs is however unclear, and additional evidences are required to confirm the role of the N(3)-methylcytidine-specific mRNA methyltransferase activity of METTL8 in vivo. Functionally, overexpression in lung progenitor cells stimulates smooth muscle-specific gene expression and suppresses adipogenic gene expression. Stimulates adipogenesis. The protein is tRNA N(3)-cytidine methyltransferase METTL8, mitochondrial of Mus musculus (Mouse).